A 260-amino-acid chain; its full sequence is Indole-3-glycerol phosphate synthase (260 aa).

It belongs to the TrpC family.

It catalyses the reaction 1-(2-carboxyphenylamino)-1-deoxy-D-ribulose 5-phosphate + H(+) = (1S,2R)-1-C-(indol-3-yl)glycerol 3-phosphate + CO2 + H2O. It participates in amino-acid biosynthesis; L-tryptophan biosynthesis; L-tryptophan from chorismate: step 4/5. This chain is Indole-3-glycerol phosphate synthase, found in Leifsonia xyli subsp. xyli (strain CTCB07).